The primary structure comprises 105 residues: Small ribosomal subunit protein eS10B (105 aa).

It belongs to the eukaryotic ribosomal protein eS10 family. In terms of assembly, component of the small ribosomal subunit (SSU). Mature yeast ribosomes consist of a small (40S) and a large (60S) subunit. The 40S small subunit contains 1 molecule of ribosomal RNA (18S rRNA) and 33 different proteins (encoded by 57 genes). The large 60S subunit contains 3 rRNA molecules (25S, 5.8S and 5S rRNA) and 46 different proteins (encoded by 81 genes). eS10 interacts with GCN1 (via middle region); this interaction is direct and promotes GCN2 kinase activity. The N-terminus is not modified.

It is found in the cytoplasm. In terms of biological role, component of the ribosome, a large ribonucleoprotein complex responsible for the synthesis of proteins in the cell. The small ribosomal subunit (SSU) binds messenger RNAs (mRNAs) and translates the encoded message by selecting cognate aminoacyl-transfer RNA (tRNA) molecules. The large subunit (LSU) contains the ribosomal catalytic site termed the peptidyl transferase center (PTC), which catalyzes the formation of peptide bonds, thereby polymerizing the amino acids delivered by tRNAs into a polypeptide chain. The nascent polypeptides leave the ribosome through a tunnel in the LSU and interact with protein factors that function in enzymatic processing, targeting, and the membrane insertion of nascent chains at the exit of the ribosomal tunnel. eS10 plays a role as a positive regulator of the GCN2 kinase activity by stimulating GCN1-mediated GCN2 activation. This is Small ribosomal subunit protein eS10B from Saccharomyces cerevisiae (strain ATCC 204508 / S288c) (Baker's yeast).